We begin with the raw amino-acid sequence, 369 residues long: Anhydro-N-acetylmuramic acid kinase (369 aa).

Gly-12 to Asp-19 lines the ATP pocket.

This sequence belongs to the anhydro-N-acetylmuramic acid kinase family.

The catalysed reaction is 1,6-anhydro-N-acetyl-beta-muramate + ATP + H2O = N-acetyl-D-muramate 6-phosphate + ADP + H(+). It participates in amino-sugar metabolism; 1,6-anhydro-N-acetylmuramate degradation. Its pathway is cell wall biogenesis; peptidoglycan recycling. Catalyzes the specific phosphorylation of 1,6-anhydro-N-acetylmuramic acid (anhMurNAc) with the simultaneous cleavage of the 1,6-anhydro ring, generating MurNAc-6-P. Is required for the utilization of anhMurNAc either imported from the medium or derived from its own cell wall murein, and thus plays a role in cell wall recycling. The polypeptide is Anhydro-N-acetylmuramic acid kinase (Escherichia coli O45:K1 (strain S88 / ExPEC)).